A 385-amino-acid chain; its full sequence is m7GpppN-mRNA hydrolase (385 aa).

The region spanning 95 to 226 (MGVPTYGAII…KLGLAPNKFF (132 aa)) is the Nudix hydrolase domain. The Nudix box motif lies at 129–150 (GKVNKEEAPHDCAAREVFEETG). The Mn(2+) site is built by E144 and E148. Residues S246, S247, S249, S276, and S284 each carry the phosphoserine modification. Residues 247-266 (SDSDNGFSSTGSTPAKPTVE) form a disordered region. Residues 249–259 (SDNGFSSTGST) show a composition bias toward low complexity.

It belongs to the Nudix hydrolase family. DCP2 subfamily. Found in a mRNA decay complex with LSM1, LSM3, LSM4, EXOSC2, EXOSC4, EXOSC10, PARN, XRN1, CNOT6, UPF1, UPF2 and UPF3B. Forms a complex with DCP1A, EDC3, DDX6 and EDC4/HEDLS, within this complex directly interacts with EDC4/HEDLS. Interacts with DPC1B, UPF1, UPF2 and UPF3B. Associates with polysomes. Interacts (via N-terminus and C-terminus) with TRIM21 (via N-terminus and C-terminus). Interacts with LIMD1, WTIP and AJUBA. Interacts with DDX17 in an RNA-dependent manner. Interacts with ZC3HAV1. Interacts with APOBEC3G in an RNA-dependent manner. Interacts with ZFP36L1 (via N-terminus). Interacts with NBDY. Requires Mn(2+) as cofactor. It depends on Mg(2+) as a cofactor.

It localises to the cytoplasm. The protein resides in the P-body. The protein localises to the nucleus. The enzyme catalyses a 5'-end (N(7)-methyl 5'-triphosphoguanosine)-ribonucleoside in mRNA + H2O = N(7)-methyl-GDP + a 5'-end phospho-ribonucleoside in mRNA + 2 H(+). Decapping metalloenzyme that catalyzes the cleavage of the cap structure on mRNAs. Removes the 7-methyl guanine cap structure from mRNA molecules, yielding a 5'-phosphorylated mRNA fragment and 7m-GDP. Necessary for the degradation of mRNAs, both in normal mRNA turnover and in nonsense-mediated mRNA decay. Plays a role in replication-dependent histone mRNA degradation. Has higher activity towards mRNAs that lack a poly(A) tail. Has no activity towards a cap structure lacking an RNA moiety. The presence of a N(6)-methyladenosine methylation at the second transcribed position of mRNAs (N(6),2'-O-dimethyladenosine cap; m6A(m)) provides resistance to DCP2-mediated decapping. Blocks autophagy in nutrient-rich conditions by repressing the expression of ATG-related genes through degradation of their transcripts. This Pongo abelii (Sumatran orangutan) protein is m7GpppN-mRNA hydrolase (DCP2).